The sequence spans 103 residues: Sec-independent protein translocase protein TatA (103 aa).

A helical membrane pass occupies residues 1-21; the sequence is MGNIFSPTHLIIILLLILLLF. Positions 48-103 are disordered; the sequence is EESIEDKVEMADTSQVINEESQQSQPLSVKRAAIRRKASSDSKGGKASIAKKQRVK. Residues 59–74 show a composition bias toward polar residues; it reads DTSQVINEESQQSQPL.

It belongs to the TatA/E family. In terms of assembly, the Tat system comprises two distinct complexes: a TatABC complex, containing multiple copies of TatA, TatB and TatC subunits, and a separate TatA complex, containing only TatA subunits. Substrates initially bind to the TatABC complex, which probably triggers association of the separate TatA complex to form the active translocon.

The protein resides in the cell inner membrane. Its function is as follows. Part of the twin-arginine translocation (Tat) system that transports large folded proteins containing a characteristic twin-arginine motif in their signal peptide across membranes. TatA could form the protein-conducting channel of the Tat system. This Bartonella tribocorum (strain CIP 105476 / IBS 506) protein is Sec-independent protein translocase protein TatA.